The sequence spans 140 residues: HTH-type transcriptional regulator YfmP (140 aa).

Residues 1–73 (MEWMKIDQVA…LQELQHFMET (73 aa)) enclose the HTH merR-type domain. Residues 6 to 25 (IDQVAKRSGLTKRTIRFYEE) constitute a DNA-binding region (H-T-H motif).

Functionally, repressor of the yfmOP operon. A mutation in yfmP leads to overexpression of yfmO, probably causing a decrease in cellular copper that is eventually responsible for a reduced copper induction of copZA. In Bacillus subtilis (strain 168), this protein is HTH-type transcriptional regulator YfmP (yfmP).